Reading from the N-terminus, the 699-residue chain is eEF1A lysine and N-terminal methyltransferase (699 aa).

Met1 carries the N-acetylmethionine modification. Phosphoserine is present on Ser267. A disordered region spans residues 433 to 460 (VSHRAQKKRKKDRKKHRPADTPEDLPAA). The span at 436-449 (RAQKKRKKDRKKHR) shows a compositional bias: basic residues.

The protein belongs to the methyltransferase superfamily. As to quaternary structure, forms a tripartite complex containing GAB1, METTL13 and SPRY2. Within the complex interacts with GAB1 and SPRY2.

Its subcellular location is the cytoplasm. It is found in the nucleus. It localises to the mitochondrion. The enzyme catalyses L-lysyl-[protein] + S-adenosyl-L-methionine = N(6)-methyl-L-lysyl-[protein] + S-adenosyl-L-homocysteine + H(+). It catalyses the reaction N(6)-methyl-L-lysyl-[protein] + S-adenosyl-L-methionine = N(6),N(6)-dimethyl-L-lysyl-[protein] + S-adenosyl-L-homocysteine + H(+). It carries out the reaction N-terminal glycyl-L-lysyl-L-glutamyl-[protein] + 3 S-adenosyl-L-methionine = N-terminal N,N,N-trimethyl-glycyl-L-lysyl-L-glutamyl-[protein] + 3 S-adenosyl-L-homocysteine + 3 H(+). Functionally, dual methyltransferase that catalyzes methylation of elongation factor 1-alpha (EEF1A1 and EEF1A2) at two different positions, and is therefore involved in the regulation of mRNA translation. Via its C-terminus, methylates EEF1A1 and EEF1A2 at the N-terminal residue 'Gly-2'. Via its N-terminus dimethylates EEF1A1 and EEF1A2 at residue 'Lys-55'. Has no activity towards core histones H2A, H2B, H3 and H4. The sequence is that of eEF1A lysine and N-terminal methyltransferase (METTL13) from Bos taurus (Bovine).